We begin with the raw amino-acid sequence, 486 residues long: Aspartyl/glutamyl-tRNA(Asn/Gln) amidotransferase subunit B (486 aa).

The protein belongs to the GatB/GatE family. GatB subfamily. In terms of assembly, heterotrimer of A, B and C subunits.

It catalyses the reaction L-glutamyl-tRNA(Gln) + L-glutamine + ATP + H2O = L-glutaminyl-tRNA(Gln) + L-glutamate + ADP + phosphate + H(+). The enzyme catalyses L-aspartyl-tRNA(Asn) + L-glutamine + ATP + H2O = L-asparaginyl-tRNA(Asn) + L-glutamate + ADP + phosphate + 2 H(+). In terms of biological role, allows the formation of correctly charged Asn-tRNA(Asn) or Gln-tRNA(Gln) through the transamidation of misacylated Asp-tRNA(Asn) or Glu-tRNA(Gln) in organisms which lack either or both of asparaginyl-tRNA or glutaminyl-tRNA synthetases. The reaction takes place in the presence of glutamine and ATP through an activated phospho-Asp-tRNA(Asn) or phospho-Glu-tRNA(Gln). In Herminiimonas arsenicoxydans, this protein is Aspartyl/glutamyl-tRNA(Asn/Gln) amidotransferase subunit B.